Consider the following 335-residue polypeptide: Dihydroorotate dehydrogenase (quinone) (335 aa).

FMN is bound by residues 58–62 (AGADK) and threonine 82. Lysine 62 is a binding site for substrate. 107–111 (NRNGF) is a substrate binding site. The FMN site is built by asparagine 135 and asparagine 168. Substrate is bound at residue asparagine 168. Serine 171 functions as the Nucleophile in the catalytic mechanism. Residue asparagine 173 participates in substrate binding. Positions 213 and 241 each coordinate FMN. 242 to 243 (NT) lines the substrate pocket. Residues glycine 264, glycine 293, and 314–315 (YS) contribute to the FMN site.

Belongs to the dihydroorotate dehydrogenase family. Type 2 subfamily. As to quaternary structure, monomer. It depends on FMN as a cofactor.

The protein localises to the cell membrane. The catalysed reaction is (S)-dihydroorotate + a quinone = orotate + a quinol. The protein operates within pyrimidine metabolism; UMP biosynthesis via de novo pathway; orotate from (S)-dihydroorotate (quinone route): step 1/1. In terms of biological role, catalyzes the conversion of dihydroorotate to orotate with quinone as electron acceptor. This Actinobacillus pleuropneumoniae serotype 5b (strain L20) protein is Dihydroorotate dehydrogenase (quinone).